A 574-amino-acid chain; its full sequence is Sulfate adenylyltransferase (574 aa).

Positions 1-170 are N-terminal; sequence MANPPHGGVL…VEAIDRLEHY (170 aa). Positions 171–395 are catalytic; sequence DYVGLRYTPA…LRESHPPRNQ (225 aa). Gln-198 serves as a coordination point for sulfate. ATP contacts are provided by residues 198-201 and 292-295; these read QTRN and GRDH. Catalysis depends on residues Thr-199, Arg-200, and Asn-201. Arg-200 lines the sulfate pocket. Sulfate is bound at residue Ala-296. Met-334 serves as a coordination point for ATP. Residues 396–574 form an allosteric regulation domain; adenylyl-sulfate kinase-like region; sequence QGFTVFLTGY…LESQGLLTQL (179 aa). Residues 435 to 438, Arg-452, 478 to 479, and Arg-516 contribute to the 3'-phosphoadenylyl sulfate site; these read ETVR and IA.

It in the N-terminal section; belongs to the sulfate adenylyltransferase family. This sequence in the C-terminal section; belongs to the APS kinase family. In terms of assembly, homohexamer. Dimer of trimers.

It is found in the cytoplasm. It carries out the reaction sulfate + ATP + H(+) = adenosine 5'-phosphosulfate + diphosphate. Its pathway is sulfur metabolism; hydrogen sulfide biosynthesis; sulfite from sulfate: step 1/3. Allosterically inhibited by 3'-phosphoadenosine 5'-phosphosulfate (PAPS). Functionally, catalyzes the first intracellular reaction of sulfate assimilation, forming adenosine-5'-phosphosulfate (APS) from inorganic sulfate and ATP. Plays an important role in sulfate activation as a component of the biosynthesis pathway of sulfur-containing amino acids. This is Sulfate adenylyltransferase from Phaeosphaeria nodorum (strain SN15 / ATCC MYA-4574 / FGSC 10173) (Glume blotch fungus).